Here is a 419-residue protein sequence, read N- to C-terminus: Hyaluronidase-3 (419 aa).

Residues 1–16 (MTMQLGLALVLGVAMC) form the signal peptide. Disulfide bonds link C42–C331, C205–C220, C356–C367, C361–C395, and C397–C406. The N-linked (GlcNAc...) asparagine glycan is linked to N69. Residue E129 is the Proton donor of the active site. A glycan (N-linked (GlcNAc...) asparagine) is linked at N215. Residues 352 to 407 (AAMACSHQRCHGHGRCAWQDPGQLKVFLHLHPGGSPGAWESFSCRCYWGWAGPTCQ) form the EGF-like domain.

The protein belongs to the glycosyl hydrolase 56 family. In terms of processing, N-glycosylated. In terms of tissue distribution, highly expressed in bladder, spleen and liver. Expressed at low levels in the kidney.

Its subcellular location is the secreted. The protein resides in the cell membrane. The protein localises to the cytoplasmic vesicle. It localises to the secretory vesicle. It is found in the acrosome. Its subcellular location is the endoplasmic reticulum. The protein resides in the early endosome. It catalyses the reaction Random hydrolysis of (1-&gt;4)-linkages between N-acetyl-beta-D-glucosamine and D-glucuronate residues in hyaluronate.. Functionally, facilitates sperm penetration into the layer of cumulus cells surrounding the egg by digesting hyaluronic acid. Involved in induction of the acrosome reaction in the sperm. Involved in follicular atresia, the breakdown of immature ovarian follicles that are not selected to ovulate. Induces ovarian granulosa cell apoptosis, possibly via apoptotic signaling pathway involving CASP8 and CASP3 activation, and poly(ADP-ribose) polymerase (PARP) cleavage. Has no hyaluronidase activity in embryonic fibroblasts in vitro. Has no hyaluronidase activity in granulosa cells in vitro. The chain is Hyaluronidase-3 (HYAL3) from Sus scrofa (Pig).